The primary structure comprises 218 residues: Protein GrpE (218 aa).

Over residues 1-21 (MSDKQREAERQQSEDKAHSEA) the composition is skewed to basic and acidic residues. The interval 1–66 (MSDKQREAER…LEEARARAEE (66 aa)) is disordered. The segment covering 24-36 (AEAGQAPEAQAAE) has biased composition (low complexity).

It belongs to the GrpE family. As to quaternary structure, homodimer.

Its subcellular location is the cytoplasm. Its function is as follows. Participates actively in the response to hyperosmotic and heat shock by preventing the aggregation of stress-denatured proteins, in association with DnaK and GrpE. It is the nucleotide exchange factor for DnaK and may function as a thermosensor. Unfolded proteins bind initially to DnaJ; upon interaction with the DnaJ-bound protein, DnaK hydrolyzes its bound ATP, resulting in the formation of a stable complex. GrpE releases ADP from DnaK; ATP binding to DnaK triggers the release of the substrate protein, thus completing the reaction cycle. Several rounds of ATP-dependent interactions between DnaJ, DnaK and GrpE are required for fully efficient folding. The polypeptide is Protein GrpE (Alkalilimnicola ehrlichii (strain ATCC BAA-1101 / DSM 17681 / MLHE-1)).